The sequence spans 609 residues: Pogo transposable element with KRAB domain (609 aa).

Disordered stretches follow at residues 1–28 and 100–127; these read MEST…ELED and EGEE…SDVK. The stretch at 8 to 28 forms a coiled coil; that stretch reads LNLSLKEEEEEEEIQSRELED. K13 participates in a covalent cross-link: Glycyl lysine isopeptide (Lys-Gly) (interchain with G-Cter in SUMO2). A KRAB domain is found at 47–118; the sequence is ALFDEVAIYF…DEWQLQGGTS (72 aa). Polar residues predominate over residues 108-119; that stretch reads SDEWQLQGGTSA. Residues 250 to 323 enclose the HTH CENPB-type domain; it reads AFRGPKNGRF…MRRYDLSLRH (74 aa). In terms of domain architecture, DDE-1 spans 353 to 567; sequence HDYEVAQMGN…ISSESIVQGF (215 aa). A Glycyl lysine isopeptide (Lys-Gly) (interchain with G-Cter in SUMO2) cross-link involves residue K384. A disordered region spans residues 588-609; sequence SELPGGGEPPKDCDTESMAESN.

The protein resides in the nucleus. This chain is Pogo transposable element with KRAB domain (POGK), found in Homo sapiens (Human).